The primary structure comprises 191 residues: dCTP deaminase, dUMP-forming (191 aa).

Residues 101–106 (KSSLGR), Asp-119, 127–129 (TLE), Gln-148, Tyr-162, and Gln-174 each bind dCTP. Glu-129 serves as the catalytic Proton donor/acceptor.

This sequence belongs to the dCTP deaminase family. As to quaternary structure, homotrimer.

It catalyses the reaction dCTP + 2 H2O = dUMP + NH4(+) + diphosphate. It participates in pyrimidine metabolism; dUMP biosynthesis; dUMP from dCTP: step 1/1. Its function is as follows. Bifunctional enzyme that catalyzes both the deamination of dCTP to dUTP and the hydrolysis of dUTP to dUMP without releasing the toxic dUTP intermediate. The sequence is that of dCTP deaminase, dUMP-forming from Streptomyces coelicolor (strain ATCC BAA-471 / A3(2) / M145).